A 323-amino-acid chain; its full sequence is Aspartate carbamoyltransferase catalytic subunit (323 aa).

Arginine 61 and threonine 62 together coordinate carbamoyl phosphate. Lysine 89 is an L-aspartate binding site. Positions 111, 144, and 147 each coordinate carbamoyl phosphate. L-aspartate-binding residues include arginine 184 and arginine 238. Residues glycine 279 and proline 280 each coordinate carbamoyl phosphate.

The protein belongs to the aspartate/ornithine carbamoyltransferase superfamily. ATCase family. As to quaternary structure, heterododecamer (2C3:3R2) of six catalytic PyrB chains organized as two trimers (C3), and six regulatory PyrI chains organized as three dimers (R2).

The catalysed reaction is carbamoyl phosphate + L-aspartate = N-carbamoyl-L-aspartate + phosphate + H(+). The protein operates within pyrimidine metabolism; UMP biosynthesis via de novo pathway; (S)-dihydroorotate from bicarbonate: step 2/3. Functionally, catalyzes the condensation of carbamoyl phosphate and aspartate to form carbamoyl aspartate and inorganic phosphate, the committed step in the de novo pyrimidine nucleotide biosynthesis pathway. This is Aspartate carbamoyltransferase catalytic subunit from Acaryochloris marina (strain MBIC 11017).